Here is a 446-residue protein sequence, read N- to C-terminus: Exodeoxyribonuclease 7 large subunit (446 aa).

The protein belongs to the XseA family. In terms of assembly, heterooligomer composed of large and small subunits.

The protein localises to the cytoplasm. The enzyme catalyses Exonucleolytic cleavage in either 5'- to 3'- or 3'- to 5'-direction to yield nucleoside 5'-phosphates.. In terms of biological role, bidirectionally degrades single-stranded DNA into large acid-insoluble oligonucleotides, which are then degraded further into small acid-soluble oligonucleotides. The chain is Exodeoxyribonuclease 7 large subunit from Staphylococcus carnosus (strain TM300).